The sequence spans 292 residues: 1D-myo-inositol 2-acetamido-2-deoxy-alpha-D-glucopyranoside deacetylase (292 aa).

Zn(2+) is bound by residues His12, Asp15, and His147.

Belongs to the MshB deacetylase family. It depends on Zn(2+) as a cofactor.

The enzyme catalyses 1D-myo-inositol 2-acetamido-2-deoxy-alpha-D-glucopyranoside + H2O = 1D-myo-inositol 2-amino-2-deoxy-alpha-D-glucopyranoside + acetate. Catalyzes the deacetylation of 1D-myo-inositol 2-acetamido-2-deoxy-alpha-D-glucopyranoside (GlcNAc-Ins) in the mycothiol biosynthesis pathway. This is 1D-myo-inositol 2-acetamido-2-deoxy-alpha-D-glucopyranoside deacetylase from Rhodococcus opacus (strain B4).